The sequence spans 171 residues: Translationally-controlled tumor protein homolog (171 aa).

Positions 1 to 171 (MIIYKDIITG…FKDGLEIEKC (171 aa)) constitute a TCTP domain.

The protein belongs to the TCTP family.

The protein resides in the cytoplasm. Functionally, involved in calcium binding and microtubule stabilization. This chain is Translationally-controlled tumor protein homolog (tpt1), found in Danio rerio (Zebrafish).